A 211-amino-acid polypeptide reads, in one-letter code: Ribonuclease T (211 aa).

Residues 24–198 enclose the Exonuclease domain; sequence VVVDVETGGF…YDAEKTAHLF (175 aa). Mg(2+) is bound by residues Asp-27, Glu-29, His-185, and Asp-190. His-185 (proton donor/acceptor) is an active-site residue.

This sequence belongs to the RNase T family. Homodimer. It depends on Mg(2+) as a cofactor.

In terms of biological role, trims short 3' overhangs of a variety of RNA species, leaving a one or two nucleotide 3' overhang. Responsible for the end-turnover of tRNA: specifically removes the terminal AMP residue from uncharged tRNA (tRNA-C-C-A). Also appears to be involved in tRNA biosynthesis. This chain is Ribonuclease T, found in Xylella fastidiosa (strain Temecula1 / ATCC 700964).